We begin with the raw amino-acid sequence, 369 residues long: Mitogen-activated protein kinase 11 (369 aa).

The region spanning 40-326 is the Protein kinase domain; sequence VPPLRPIGRG…VDEALCHPYL (287 aa). ATP-binding positions include 46–54 and lysine 69; that span reads IGRGASGIV. The active-site Proton acceptor is aspartate 166. Threonine 198 is subject to Phosphothreonine. The TXY motif lies at 198 to 200; sequence TEY. At tyrosine 200 the chain carries Phosphotyrosine. Threonine 203 carries the post-translational modification Phosphothreonine.

Belongs to the protein kinase superfamily. CMGC Ser/Thr protein kinase family. MAP kinase subfamily. Interacts with MKK1, MKK2 and MKK6. Dually phosphorylated on Thr-198 and Tyr-200, which activates the enzyme.

The catalysed reaction is L-seryl-[protein] + ATP = O-phospho-L-seryl-[protein] + ADP + H(+). It carries out the reaction L-threonyl-[protein] + ATP = O-phospho-L-threonyl-[protein] + ADP + H(+). With respect to regulation, activated by threonine and tyrosine phosphorylation. This is Mitogen-activated protein kinase 11 (MPK11) from Arabidopsis thaliana (Mouse-ear cress).